Consider the following 248-residue polypeptide: ATP synthase subunit a, chloroplastic (248 aa).

A run of 5 helical transmembrane segments spans residues glutamine 38–valine 58, valine 96–valine 116, isoleucine 135–alanine 155, leucine 200–leucine 220, and glycine 221–glycine 241.

Belongs to the ATPase A chain family. F-type ATPases have 2 components, CF(1) - the catalytic core - and CF(0) - the membrane proton channel. CF(1) has five subunits: alpha(3), beta(3), gamma(1), delta(1), epsilon(1). CF(0) has four main subunits: a, b, b' and c.

The protein resides in the plastid. The protein localises to the chloroplast thylakoid membrane. Key component of the proton channel; it plays a direct role in the translocation of protons across the membrane. This chain is ATP synthase subunit a, chloroplastic, found in Welwitschia mirabilis (Tree tumbo).